Consider the following 125-residue polypeptide: MKDQGRSTRKRTGGRLHDVSKKKRHQLGREPAETTVDDPRFQVIDARGSDDKLRALSTNIAQVADSGEVTTEEIENVVDNPANVNYIRRNIITKGAIIETSAGQARVTSRPGQTGQVSAVLLEDS.

A disordered region spans residues 1–36 (MKDQGRSTRKRTGGRLHDVSKKKRHQLGREPAETTV). Basic residues predominate over residues 7 to 26 (STRKRTGGRLHDVSKKKRHQ). Basic and acidic residues predominate over residues 27–36 (LGREPAETTV).

It belongs to the eukaryotic ribosomal protein eS8 family. As to quaternary structure, part of the 30S ribosomal subunit.

This Haloquadratum walsbyi (strain DSM 16790 / HBSQ001) protein is Small ribosomal subunit protein eS8.